We begin with the raw amino-acid sequence, 379 residues long: Putative nucleosome assembly protein C2D10.11C (379 aa).

Basic and acidic residues predominate over residues 1–10 (MSKGPGDFKK). 2 disordered regions span residues 1–30 (MSKG…DVHL) and 345–379 (SDFN…EISD). Positions 16–28 (AAQTPQNTPSSDV) are enriched in polar residues.

This sequence belongs to the nucleosome assembly protein (NAP) family.

Its subcellular location is the nucleus. This chain is Putative nucleosome assembly protein C2D10.11C, found in Schizosaccharomyces pombe (strain 972 / ATCC 24843) (Fission yeast).